We begin with the raw amino-acid sequence, 182 residues long: Negative transcriptional regulator PadR (182 aa).

The protein belongs to the PadR family. Homodimer.

Its subcellular location is the cytoplasm. PadR repressor activity is inhibited in the presence of phenolic acids, which directly modulate PadR binding to the promoter of padC, leading to the dissociation of PadR from the operator DNA and expression of padC. In the presence of MgCl(2), binding is not altered by phenolic acids. Functionally, transcriptional regulator involved in the regulation of the metabolism of phenolic acids. In the absence of phenolic acids, represses the expression of padC, which encodes a phenolic acid decarboxylase (PAD) involved in the detoxification of harmful phenolic acids. Acts by binding to the padC promoter region, preventing the transcription of the gene. The protein is Negative transcriptional regulator PadR of Bacillus subtilis (strain 168).